The chain runs to 347 residues: MSVMFDPEAAIYPFPPKPLPLNLDEKQFYREKIKRMLKERDAVMVAHYYTDPEIQQLAEETGGCISDSLEMARFGAKHSASTLLVAGVRFMGETAKILSPEKTILMPTLNAECSLDLGCPIEEFSAFCDAHPDRTVVVYANTSAAVKARADWVVTSSIAVELIEHLDSLGQKIIWAPDKHLGNYVQKQTGADVLCWQGACIVHDEFKTQALVRMKALYPEAAILVHPESPQSIVDMADAVGSTSQLINAAKTLPQQKLIVATDRGIFYKMQQAVPEKELFEAPTAGEGATCRSCAHCPWMAMNGLKAIADGLESGGAAHEIHVDAALREGALLPLNRMLEFAATLRS.

The iminosuccinate site is built by histidine 47 and serine 68. Cysteine 113 contacts [4Fe-4S] cluster. Iminosuccinate is bound by residues tyrosine 139–asparagine 141 and serine 156. [4Fe-4S] cluster is bound at residue cysteine 200. Residues histidine 226–glutamate 228 and threonine 243 each bind iminosuccinate. Residue cysteine 297 coordinates [4Fe-4S] cluster.

This sequence belongs to the quinolinate synthase family. Type 1 subfamily. Requires [4Fe-4S] cluster as cofactor.

The protein localises to the cytoplasm. The catalysed reaction is iminosuccinate + dihydroxyacetone phosphate = quinolinate + phosphate + 2 H2O + H(+). It participates in cofactor biosynthesis; NAD(+) biosynthesis; quinolinate from iminoaspartate: step 1/1. Catalyzes the condensation of iminoaspartate with dihydroxyacetone phosphate to form quinolinate. This chain is Quinolinate synthase, found in Enterobacter sp. (strain 638).